Here is a 181-residue protein sequence, read N- to C-terminus: uncharacterized protein (181 aa).

Residues 1 to 14 (MQKCIMRSTEFKTH) are Cytoplasmic-facing. Residues 15 to 35 (FSFHSIFSFPLSAALLALISA) form a helical membrane-spanning segment. Residues 36 to 58 (SEPASKAFINVQFISSPLVKKEV) are Extracellular-facing. The helical transmembrane segment at 59–79 (LPFIVSFHSLSSNGILSFSPF) threads the bilayer. Over 80-84 (TSSNL) the chain is Cytoplasmic. The helical transmembrane segment at 85-105 (SIAQLPFLIKVPLLSMGSLAL) threads the bilayer. Over 106–116 (ENFNKFIPRAD) the chain is Extracellular. The helical transmembrane segment at 117–137 (LVAAWVTIIMVFTFGNFLSTL) threads the bilayer. Residues 138 to 153 (SIKTGQNLWHLSKISS) lie on the Cytoplasmic side of the membrane. A helical membrane pass occupies residues 154–174 (SVSPLLLGIILGSQSGEIMLG). Topologically, residues 175 to 181 (KNLLITS) are extracellular.

Its subcellular location is the membrane. This is an uncharacterized protein from Saccharomyces cerevisiae (strain ATCC 204508 / S288c) (Baker's yeast).